Here is a 198-residue protein sequence, read N- to C-terminus: Protein hunchback (198 aa).

Disordered stretches follow at residues 16–117 (SHHH…PMQS) and 152–198 (NDKL…KYMA). Residues 17-31 (HHHHHHHAHHSHHQH) are compositionally biased toward basic residues. Composition is skewed to low complexity over residues 35–46 (SNSNSNASSPHQ) and 68–83 (QQQQ…QQQQ). The segment covering 95 to 105 (PSPSNNDQNSP) has biased composition (polar residues). Over residues 179-198 (EPEKEHDLMSNSSEDMKYMA) the composition is skewed to basic and acidic residues.

Belongs to the hunchback C2H2-type zinc-finger protein family.

The protein localises to the nucleus. In terms of biological role, gap class segmentation protein that controls development of head structures. The chain is Protein hunchback (hb) from Drosophila disjuncta (Fruit fly).